The following is a 154-amino-acid chain: S-protein homolog 12 (154 aa).

Positions 1–30 (MGTNKIPKTLNGNLVLILIITIMMVTHSHG) are cleaved as a signal peptide.

It belongs to the plant self-incompatibility (S1) protein family.

Its subcellular location is the secreted. In Arabidopsis thaliana (Mouse-ear cress), this protein is S-protein homolog 12.